Reading from the N-terminus, the 607-residue chain is 2-isopropylmalate synthase (607 aa).

Positions 1 to 10 are enriched in polar residues; sequence MASFSESLSQ. Residues 1-40 form a disordered region; it reads MASFSESLSQDPADAYKSAPSITKPMGPPSPGQPQWNPQR. A Pyruvate carboxyltransferase domain is found at 75–349; that stretch reads PLWCAVDLRD…DPQIDFSNID (275 aa). Mg(2+) is bound by residues aspartate 84, histidine 288, histidine 290, and asparagine 324. The tract at residues 491 to 607 is regulatory domain; it reads PVQPLERIKQ…VSAVNRAMPR (117 aa).

It belongs to the alpha-IPM synthase/homocitrate synthase family. LeuA type 2 subfamily. As to quaternary structure, homodimer. Mg(2+) is required as a cofactor.

The protein localises to the cytoplasm. The enzyme catalyses 3-methyl-2-oxobutanoate + acetyl-CoA + H2O = (2S)-2-isopropylmalate + CoA + H(+). Its pathway is amino-acid biosynthesis; L-leucine biosynthesis; L-leucine from 3-methyl-2-oxobutanoate: step 1/4. In terms of biological role, catalyzes the condensation of the acetyl group of acetyl-CoA with 3-methyl-2-oxobutanoate (2-ketoisovalerate) to form 3-carboxy-3-hydroxy-4-methylpentanoate (2-isopropylmalate). This Mycobacterium leprae (strain TN) protein is 2-isopropylmalate synthase.